A 255-amino-acid polypeptide reads, in one-letter code: 4-diphosphocytidyl-2-C-methyl-D-erythritol kinase (255 aa).

Lys6 is a catalytic residue. Residue 95–105 (PVCAGLGGGSS) coordinates ATP. The active site involves Asp137.

Belongs to the GHMP kinase family. IspE subfamily.

The catalysed reaction is 4-CDP-2-C-methyl-D-erythritol + ATP = 4-CDP-2-C-methyl-D-erythritol 2-phosphate + ADP + H(+). It functions in the pathway isoprenoid biosynthesis; isopentenyl diphosphate biosynthesis via DXP pathway; isopentenyl diphosphate from 1-deoxy-D-xylulose 5-phosphate: step 3/6. Functionally, catalyzes the phosphorylation of the position 2 hydroxy group of 4-diphosphocytidyl-2C-methyl-D-erythritol. In Campylobacter jejuni subsp. jejuni serotype O:23/36 (strain 81-176), this protein is 4-diphosphocytidyl-2-C-methyl-D-erythritol kinase.